A 402-amino-acid chain; its full sequence is Enoyl-[acyl-carrier-protein] reductase [NADH] (402 aa).

NAD(+)-binding positions include 48 to 53 (GASSGY), 74 to 75 (FE), 111 to 112 (DA), and 140 to 141 (LA). Residue Tyr-226 coordinates substrate. Residue Tyr-236 is the Proton donor of the active site. NAD(+) contacts are provided by residues Lys-245 and 274 to 276 (VVT).

This sequence belongs to the TER reductase family. Monomer.

The enzyme catalyses a 2,3-saturated acyl-[ACP] + NAD(+) = a (2E)-enoyl-[ACP] + NADH + H(+). It participates in lipid metabolism; fatty acid biosynthesis. In terms of biological role, involved in the final reduction of the elongation cycle of fatty acid synthesis (FAS II). Catalyzes the reduction of a carbon-carbon double bond in an enoyl moiety that is covalently linked to an acyl carrier protein (ACP). The chain is Enoyl-[acyl-carrier-protein] reductase [NADH] from Xanthomonas axonopodis pv. citri (strain 306).